The following is a 208-amino-acid chain: Large ribosomal subunit protein bL25 (208 aa).

The disordered stretch occupies residues 178–208; it reads LPPQQSEVPEPDSEEEPKEPEAIKEKDNDGE. Residues 186–195 show a composition bias toward acidic residues; that stretch reads PEPDSEEEPK. A compositionally biased stretch (basic and acidic residues) spans 196–208; the sequence is EPEAIKEKDNDGE.

Belongs to the bacterial ribosomal protein bL25 family. CTC subfamily. In terms of assembly, part of the 50S ribosomal subunit; part of the 5S rRNA/L5/L18/L25 subcomplex. Contacts the 5S rRNA. Binds to the 5S rRNA independently of L5 and L18.

Functionally, this is one of the proteins that binds to the 5S RNA in the ribosome where it forms part of the central protuberance. The polypeptide is Large ribosomal subunit protein bL25 (Bacillus pumilus (strain SAFR-032)).